A 158-amino-acid polypeptide reads, in one-letter code: MSEQSNTEMAFQIQRIYTKDISFEAPNAPQVFQQEWQPEVKLDLDTASSELAQGVYEVVLRVTVTAALGEETAFLCEVQQGGIFSIDGIEGTQLAHCLGAYCPNILFPYARECITSLVSRGTFPQLNLAPVNFDALFMNYLQQQAEQSQGGEQTEQEA.

The protein belongs to the SecB family. Homotetramer, a dimer of dimers. One homotetramer interacts with 1 SecA dimer.

It is found in the cytoplasm. Functionally, one of the proteins required for the normal export of preproteins out of the cell cytoplasm. It is a molecular chaperone that binds to a subset of precursor proteins, maintaining them in a translocation-competent state. It also specifically binds to its receptor SecA. In Photorhabdus laumondii subsp. laumondii (strain DSM 15139 / CIP 105565 / TT01) (Photorhabdus luminescens subsp. laumondii), this protein is Protein-export protein SecB.